The chain runs to 436 residues: Serine--tRNA ligase (436 aa).

Residues 43–55 (TKSEQLKQKRNEV) are compositionally biased toward basic and acidic residues. Positions 43 to 69 (TKSEQLKQKRNEVSDQIAQAKRNKEDA) are disordered. 237-239 (TAE) contacts L-serine. An ATP-binding site is contributed by 268–270 (RSE). E291 serves as a coordination point for L-serine. Position 355-358 (355-358 (EISS)) interacts with ATP. S390 contributes to the L-serine binding site.

This sequence belongs to the class-II aminoacyl-tRNA synthetase family. Type-1 seryl-tRNA synthetase subfamily. In terms of assembly, homodimer. The tRNA molecule binds across the dimer.

The protein resides in the cytoplasm. The catalysed reaction is tRNA(Ser) + L-serine + ATP = L-seryl-tRNA(Ser) + AMP + diphosphate + H(+). It carries out the reaction tRNA(Sec) + L-serine + ATP = L-seryl-tRNA(Sec) + AMP + diphosphate + H(+). It participates in aminoacyl-tRNA biosynthesis; selenocysteinyl-tRNA(Sec) biosynthesis; L-seryl-tRNA(Sec) from L-serine and tRNA(Sec): step 1/1. Its function is as follows. Catalyzes the attachment of serine to tRNA(Ser). Is also able to aminoacylate tRNA(Sec) with serine, to form the misacylated tRNA L-seryl-tRNA(Sec), which will be further converted into selenocysteinyl-tRNA(Sec). This Lactobacillus gasseri (strain ATCC 33323 / DSM 20243 / BCRC 14619 / CIP 102991 / JCM 1131 / KCTC 3163 / NCIMB 11718 / NCTC 13722 / AM63) protein is Serine--tRNA ligase.